The following is a 173-amino-acid chain: Succinate dehydrogenase assembly factor 3, mitochondrial (173 aa).

The transit peptide at 1-59 directs the protein to the mitochondrion; the sequence is MFRPSTSLALRSTLRQLASASNQPIPPGSEINAVKRTVATILPPIRLYRRIIRAHRRLD. A disordered region spans residues 149-173; that stretch reads FPPEKQRELAEKAAADAGLSVKKDE. Over residues 152-162 the composition is skewed to basic and acidic residues; that stretch reads EKQRELAEKAA.

This sequence belongs to the complex I LYR family. SDHAF3 subfamily. As to quaternary structure, interacts with the iron-sulfur protein subunit within the SDH catalytic dimer.

It localises to the mitochondrion matrix. Functionally, plays an essential role in the assembly of succinate dehydrogenase (SDH), an enzyme complex (also referred to as respiratory complex II) that is a component of both the tricarboxylic acid (TCA) cycle and the mitochondrial electron transport chain, and which couples the oxidation of succinate to fumarate with the reduction of ubiquinone (coenzyme Q) to ubiquinol. Promotes maturation of the iron-sulfur protein subunit of the SDH catalytic dimer, protecting it from the deleterious effects of oxidants. May act together with SDHAF1. This chain is Succinate dehydrogenase assembly factor 3, mitochondrial, found in Mycosarcoma maydis (Corn smut fungus).